The chain runs to 143 residues: Large ribosomal subunit protein uL15 (143 aa).

A disordered region spans residues 1 to 52 (MELNTIQPADGAKHYKRRVGRGIGSGLGKTAGRGHKGQKSRSGGFHKVGFEG). A compositionally biased stretch (gly residues) spans 21 to 31 (RGIGSGLGKTA).

Belongs to the universal ribosomal protein uL15 family. In terms of assembly, part of the 50S ribosomal subunit.

Functionally, binds to the 23S rRNA. The sequence is that of Large ribosomal subunit protein uL15 from Herminiimonas arsenicoxydans.